Reading from the N-terminus, the 275-residue chain is Formamidopyrimidine-DNA glycosylase (275 aa).

The Schiff-base intermediate with DNA role is filled by P2. E3 serves as the catalytic Proton donor. K58 serves as the catalytic Proton donor; for beta-elimination activity. DNA-binding residues include H91, R109, and R154. The segment at 240–274 (AVYERAGLPCRVCGTPIRRLVQGQRATYFCPSCQK) adopts an FPG-type zinc-finger fold. R264 (proton donor; for delta-elimination activity) is an active-site residue.

This sequence belongs to the FPG family. In terms of assembly, monomer. It depends on Zn(2+) as a cofactor.

The enzyme catalyses Hydrolysis of DNA containing ring-opened 7-methylguanine residues, releasing 2,6-diamino-4-hydroxy-5-(N-methyl)formamidopyrimidine.. The catalysed reaction is 2'-deoxyribonucleotide-(2'-deoxyribose 5'-phosphate)-2'-deoxyribonucleotide-DNA = a 3'-end 2'-deoxyribonucleotide-(2,3-dehydro-2,3-deoxyribose 5'-phosphate)-DNA + a 5'-end 5'-phospho-2'-deoxyribonucleoside-DNA + H(+). Its function is as follows. Involved in base excision repair of DNA damaged by oxidation or by mutagenic agents. Acts as a DNA glycosylase that recognizes and removes damaged bases. Has a preference for oxidized purines, such as 7,8-dihydro-8-oxoguanine (8-oxoG). Has AP (apurinic/apyrimidinic) lyase activity and introduces nicks in the DNA strand. Cleaves the DNA backbone by beta-delta elimination to generate a single-strand break at the site of the removed base with both 3'- and 5'-phosphates. The polypeptide is Formamidopyrimidine-DNA glycosylase (Bordetella pertussis (strain Tohama I / ATCC BAA-589 / NCTC 13251)).